The chain runs to 263 residues: Hydroxyethylthiazole kinase 1 (263 aa).

Met-42 serves as a coordination point for substrate. Lys-118 and Thr-164 together coordinate ATP. Gly-191 is a binding site for substrate.

It belongs to the Thz kinase family. Mg(2+) is required as a cofactor.

It catalyses the reaction 5-(2-hydroxyethyl)-4-methylthiazole + ATP = 4-methyl-5-(2-phosphooxyethyl)-thiazole + ADP + H(+). It functions in the pathway cofactor biosynthesis; thiamine diphosphate biosynthesis; 4-methyl-5-(2-phosphoethyl)-thiazole from 5-(2-hydroxyethyl)-4-methylthiazole: step 1/1. Functionally, catalyzes the phosphorylation of the hydroxyl group of 4-methyl-5-beta-hydroxyethylthiazole (THZ). This is Hydroxyethylthiazole kinase 1 from Clostridium botulinum (strain ATCC 19397 / Type A).